The chain runs to 394 residues: Phosphoglycerate kinase (394 aa).

Residues 21–23, R37, 60–63, R115, and R148 each bind substrate; these read DLN and HLGR. ATP-binding positions include K199, E321, and 347–350; that span reads GGDT.

Belongs to the phosphoglycerate kinase family. Monomer.

It is found in the cytoplasm. It catalyses the reaction (2R)-3-phosphoglycerate + ATP = (2R)-3-phospho-glyceroyl phosphate + ADP. It functions in the pathway carbohydrate degradation; glycolysis; pyruvate from D-glyceraldehyde 3-phosphate: step 2/5. The protein is Phosphoglycerate kinase of Azoarcus sp. (strain BH72).